Consider the following 184-residue polypeptide: Small ribosomal subunit protein uS4 (184 aa).

An S4 RNA-binding domain is found at 108-172; the sequence is RRLQTQVHRL…SPMTKESHPE (65 aa). The segment at 163–184 is disordered; sequence SPMTKESHPERPAQIAASVVEE.

It belongs to the universal ribosomal protein uS4 family. In terms of assembly, part of the 30S ribosomal subunit. Contacts protein S5. The interaction surface between S4 and S5 is involved in control of translational fidelity.

One of the primary rRNA binding proteins, it binds directly to 16S rRNA where it nucleates assembly of the body of the 30S subunit. In terms of biological role, with S5 and S12 plays an important role in translational accuracy. The sequence is that of Small ribosomal subunit protein uS4 from Methanococcoides burtonii (strain DSM 6242 / NBRC 107633 / OCM 468 / ACE-M).